We begin with the raw amino-acid sequence, 468 residues long: Putative chitinase 1 (468 aa).

An N-terminal signal peptide occupies residues Met-1 to Gly-21. In terms of domain architecture, GH18 spans Phe-22–Tyr-381. Residues Cys-26 and Cys-51 are joined by a disulfide bond. Residues Val-73–Phe-74 and Gly-100–Asp-103 each bind chitin. Catalysis depends on Glu-143, which acts as the Proton donor. Chitin-binding positions include Tyr-144, Lys-213 to Asp-216, and Trp-353. A coiled-coil region spans residues Ser-386–Gln-440.

The protein belongs to the glycosyl hydrolase 18 family. As to expression, prismatic layer of shell (at protein level). Expressed primarily in the mantle with highest level in the outer epithelium of the mantle edge and lower level in the mantle pallium.

It is found in the secreted. The catalysed reaction is Random endo-hydrolysis of N-acetyl-beta-D-glucosaminide (1-&gt;4)-beta-linkages in chitin and chitodextrins.. This Margaritifera margaritifera (Freshwater pearl mussel) protein is Putative chitinase 1.